The chain runs to 149 residues: Protein SprT-like (149 aa).

In terms of domain architecture, SprT-like spans 4 to 143 (TDYVKQVSLE…CGLCRGKLLL (140 aa)). His-64 contributes to the Zn(2+) binding site. The active site involves Glu-65. His-68 provides a ligand contact to Zn(2+).

This sequence belongs to the SprT family. It depends on Zn(2+) as a cofactor.

Its subcellular location is the cytoplasm. The polypeptide is Protein SprT-like (Streptococcus pneumoniae (strain JJA)).